We begin with the raw amino-acid sequence, 728 residues long: Catalase-peroxidase 1 (728 aa).

An N-terminal signal peptide occupies residues 1-16 (MDKAQHTQGKCPVAHG). A cross-link (tryptophyl-tyrosyl-methioninium (Trp-Tyr) (with M-251)) is located at residues 97–225 (WHSAGTYRMA…LAAVMMGLIY (129 aa)). Histidine 98 functions as the Proton acceptor in the catalytic mechanism. Residues 225–251 (YVNPEGVDGQPDPLKTAQDIRVTFERM) constitute a cross-link (tryptophyl-tyrosyl-methioninium (Tyr-Met) (with W-97)). Residue histidine 266 coordinates heme b.

This sequence belongs to the peroxidase family. Peroxidase/catalase subfamily. In terms of assembly, homodimer or homotetramer. Requires heme b as cofactor. Formation of the three residue Trp-Tyr-Met cross-link is important for the catalase, but not the peroxidase activity of the enzyme.

It carries out the reaction H2O2 + AH2 = A + 2 H2O. The enzyme catalyses 2 H2O2 = O2 + 2 H2O. In terms of biological role, bifunctional enzyme with both catalase and broad-spectrum peroxidase activity. The polypeptide is Catalase-peroxidase 1 (Shewanella frigidimarina (strain NCIMB 400)).